Reading from the N-terminus, the 635-residue chain is Threonine--tRNA ligase (635 aa).

The TGS domain maps to 1–58; sequence MIHVTCNQEAFELPEGASAMDLANKMKQSHCFVGALINDQEKDLSTTLQDGDTVLFLT. Residues 237–528 form a catalytic region; sequence DHRVLGTKLD…LIEHFKGRFP (292 aa). 3 residues coordinate Zn(2+): C328, H379, and H505.

It belongs to the class-II aminoacyl-tRNA synthetase family. Homodimer. Zn(2+) is required as a cofactor.

It is found in the cytoplasm. The catalysed reaction is tRNA(Thr) + L-threonine + ATP = L-threonyl-tRNA(Thr) + AMP + diphosphate + H(+). Catalyzes the attachment of threonine to tRNA(Thr) in a two-step reaction: L-threonine is first activated by ATP to form Thr-AMP and then transferred to the acceptor end of tRNA(Thr). Also edits incorrectly charged L-seryl-tRNA(Thr). The polypeptide is Threonine--tRNA ligase (Chlamydia trachomatis serovar L2b (strain UCH-1/proctitis)).